A 113-amino-acid chain; its full sequence is Probable 4-amino-4-deoxy-L-arabinose-phosphoundecaprenol flippase subunit ArnE (113 aa).

3 helical membrane passes run 40 to 60 (FGWL…WLLV), 64 to 84 (LPLG…TLLA), and 92 to 112 (VDRH…LMQG).

The protein belongs to the ArnE family. Heterodimer of ArnE and ArnF.

The protein localises to the cell inner membrane. The protein operates within bacterial outer membrane biogenesis; lipopolysaccharide biosynthesis. Functionally, translocates 4-amino-4-deoxy-L-arabinose-phosphoundecaprenol (alpha-L-Ara4N-phosphoundecaprenol) from the cytoplasmic to the periplasmic side of the inner membrane. This Pectobacterium atrosepticum (strain SCRI 1043 / ATCC BAA-672) (Erwinia carotovora subsp. atroseptica) protein is Probable 4-amino-4-deoxy-L-arabinose-phosphoundecaprenol flippase subunit ArnE.